Reading from the N-terminus, the 80-residue chain is Large ribosomal subunit protein bL31B (80 aa).

It belongs to the bacterial ribosomal protein bL31 family. Type B subfamily. Part of the 50S ribosomal subunit.

The sequence is that of Large ribosomal subunit protein bL31B from Xylella fastidiosa (strain 9a5c).